A 915-amino-acid chain; its full sequence is Protein SLFN14 (915 aa).

Over residues 157–167 (AAQRGRRRLHP) the composition is skewed to basic residues. The disordered stretch occupies residues 157 to 176 (AAQRGRRRLHPPRASNSNLQ). The tract at residues 204 to 389 (ESTHVEFKRF…KVLEFKGALQ (186 aa)) is required for endoribonuclease activity. Residues 390 to 569 (RHLFPVTQKT…QLGCEFFNLL (180 aa)) are required for ribosome binding.

In terms of assembly, associates with ribosomes in an ATP-independent manner. The cofactor is Mg(2+). Mn(2+) is required as a cofactor. In terms of tissue distribution, detected in reticulocytes (at protein level).

It is found in the nucleus. Shows no ribosome-associated and endoribonuclease activities. Functionally, displays polysome-associated endoribonuclease activity towards mRNAs and rRNAs. May play a role in RNA surveillance pathways by recognizing stalled ribosomes and triggering endonucleolytic cleavage of aberrant mRNAs. Cleaves RNAs in a magnesium-, manganese-dependent and ATP-independent manner. Involved in correct maturation of megakaryocytes and especially important for proplatelet extension. In Oryctolagus cuniculus (Rabbit), this protein is Protein SLFN14.